The following is a 408-amino-acid chain: uncharacterized protein (408 aa).

Residues E35, D61, and N96 each contribute to the a divalent metal cation site.

Belongs to the metallophosphoesterase superfamily. The cofactor is a divalent metal cation.

This is an uncharacterized protein from Bacillus subtilis (strain 168).